The following is a 490-amino-acid chain: 3-octaprenyl-4-hydroxybenzoate carboxy-lyase (490 aa).

N172 provides a ligand contact to Mn(2+). Prenylated FMN contacts are provided by residues 175-177 (IYR), 189-191 (RWL), and 194-195 (RG). E238 is a Mn(2+) binding site. Residue D287 is the Proton donor of the active site.

It belongs to the UbiD family. In terms of assembly, homohexamer. Prenylated FMN is required as a cofactor. Requires Mn(2+) as cofactor.

The protein resides in the cell membrane. It carries out the reaction a 4-hydroxy-3-(all-trans-polyprenyl)benzoate + H(+) = a 2-(all-trans-polyprenyl)phenol + CO2. Its pathway is cofactor biosynthesis; ubiquinone biosynthesis. Its function is as follows. Catalyzes the decarboxylation of 3-octaprenyl-4-hydroxy benzoate to 2-octaprenylphenol, an intermediate step in ubiquinone biosynthesis. The protein is 3-octaprenyl-4-hydroxybenzoate carboxy-lyase of Saccharophagus degradans (strain 2-40 / ATCC 43961 / DSM 17024).